The chain runs to 307 residues: GTPase Era (307 aa).

The Era-type G domain maps to 17-186; sequence RCGFVAIVGR…LELIKPYLPE (170 aa). The interval 25–32 is G1; the sequence is GRPNVGKS. 25 to 32 serves as a coordination point for GTP; the sequence is GRPNVGKS. The G2 stretch occupies residues 51–55; sequence QTTRN. The G3 stretch occupies residues 72–75; sequence DTPG. Residues 72–76 and 133–136 each bind GTP; these read DTPGF and NKID. The segment at 133 to 136 is G4; sequence NKID. The segment at 165–167 is G5; that stretch reads VSA. The KH type-2 domain occupies 217–293; that stretch reads LGEELPYAMN…FLKVWVKVKS (77 aa).

It belongs to the TRAFAC class TrmE-Era-EngA-EngB-Septin-like GTPase superfamily. Era GTPase family. Monomer.

The protein localises to the cytoplasm. The protein resides in the cell inner membrane. Functionally, an essential GTPase that binds both GDP and GTP, with rapid nucleotide exchange. Plays a role in 16S rRNA processing and 30S ribosomal subunit biogenesis and possibly also in cell cycle regulation and energy metabolism. This Neisseria meningitidis serogroup A / serotype 4A (strain DSM 15465 / Z2491) protein is GTPase Era.